Reading from the N-terminus, the 232-residue chain is Ubiquinone biosynthesis O-methyltransferase (232 aa).

Positions 36, 55, 76, and 120 each coordinate S-adenosyl-L-methionine.

Belongs to the methyltransferase superfamily. UbiG/COQ3 family.

The enzyme catalyses a 3-demethylubiquinol + S-adenosyl-L-methionine = a ubiquinol + S-adenosyl-L-homocysteine + H(+). It carries out the reaction a 3-(all-trans-polyprenyl)benzene-1,2-diol + S-adenosyl-L-methionine = a 2-methoxy-6-(all-trans-polyprenyl)phenol + S-adenosyl-L-homocysteine + H(+). It participates in cofactor biosynthesis; ubiquinone biosynthesis. In terms of biological role, O-methyltransferase that catalyzes the 2 O-methylation steps in the ubiquinone biosynthetic pathway. This is Ubiquinone biosynthesis O-methyltransferase from Burkholderia multivorans (strain ATCC 17616 / 249).